A 396-amino-acid polypeptide reads, in one-letter code: S-adenosylmethionine synthase (396 aa).

His-16 provides a ligand contact to ATP. Residue Asp-18 coordinates Mg(2+). Glu-44 is a binding site for K(+). The L-methionine site is built by Glu-57 and Gln-100. The flexible loop stretch occupies residues 100–110 (QSPDINQGVDR). Residues 165–167 (DAK), Asp-240, 246–247 (RK), Ala-263, and Lys-267 contribute to the ATP site. Residue Asp-240 coordinates L-methionine. L-methionine is bound at residue Lys-271.

Belongs to the AdoMet synthase family. In terms of assembly, homotetramer; dimer of dimers. It depends on Mg(2+) as a cofactor. Requires K(+) as cofactor.

It localises to the cytoplasm. It carries out the reaction L-methionine + ATP + H2O = S-adenosyl-L-methionine + phosphate + diphosphate. The protein operates within amino-acid biosynthesis; S-adenosyl-L-methionine biosynthesis; S-adenosyl-L-methionine from L-methionine: step 1/1. Its function is as follows. Catalyzes the formation of S-adenosylmethionine (AdoMet) from methionine and ATP. The overall synthetic reaction is composed of two sequential steps, AdoMet formation and the subsequent tripolyphosphate hydrolysis which occurs prior to release of AdoMet from the enzyme. In Pseudomonas fluorescens (strain ATCC BAA-477 / NRRL B-23932 / Pf-5), this protein is S-adenosylmethionine synthase.